Consider the following 380-residue polypeptide: Chaperone protein DnaJ 2 (380 aa).

A J domain is found at 10–75 (DYYKILGVSK…KKRKEYDQAR (66 aa)). The span at 32 to 56 (KIARDNHPDSHPGDKAAEARFKEAS) shows a compositional bias: basic and acidic residues. Positions 32 to 63 (KIARDNHPDSHPGDKAAEARFKEASEANDVLS) are disordered. The CR-type zinc finger occupies 151-230 (GTTVTMDMVS…CHGSGRAKST (80 aa)). Residues cysteine 164, cysteine 167, cysteine 181, cysteine 184, cysteine 204, cysteine 207, cysteine 218, and cysteine 221 each contribute to the Zn(2+) site. CXXCXGXG motif repeat units follow at residues 164 to 171 (CQACRGTG), 181 to 188 (CSTCQGSG), 204 to 211 (CPDCHGRG), and 218 to 225 (CQVCHGSG).

Belongs to the DnaJ family. As to quaternary structure, homodimer. Requires Zn(2+) as cofactor.

It localises to the cytoplasm. Participates actively in the response to hyperosmotic and heat shock by preventing the aggregation of stress-denatured proteins and by disaggregating proteins, also in an autonomous, DnaK-independent fashion. Unfolded proteins bind initially to DnaJ; upon interaction with the DnaJ-bound protein, DnaK hydrolyzes its bound ATP, resulting in the formation of a stable complex. GrpE releases ADP from DnaK; ATP binding to DnaK triggers the release of the substrate protein, thus completing the reaction cycle. Several rounds of ATP-dependent interactions between DnaJ, DnaK and GrpE are required for fully efficient folding. Also involved, together with DnaK and GrpE, in the DNA replication of plasmids through activation of initiation proteins. The chain is Chaperone protein DnaJ 2 from Cutibacterium acnes (strain DSM 16379 / KPA171202) (Propionibacterium acnes).